Consider the following 124-residue polypeptide: MGDRNLTPKQFGALGEQYAAAWLEEHGWTTLSRNWHTRYGELDIVMLNPEYTVVFVEVKSRRSMHYGYPQEAITPAKQHNLRKAACDWLLDRRNRVPHSAVRFDVVTIVLRVGRPLVHHIENAF.

It belongs to the UPF0102 family.

This is UPF0102 protein BL0935 from Bifidobacterium longum (strain NCC 2705).